A 291-amino-acid polypeptide reads, in one-letter code: Ribonuclease Z (291 aa).

Positions 61, 63, 65, 66, 133, 201, and 257 each coordinate Zn(2+). The active-site Proton acceptor is Asp-65.

Belongs to the RNase Z family. Homodimer. Requires Zn(2+) as cofactor.

The catalysed reaction is Endonucleolytic cleavage of RNA, removing extra 3' nucleotides from tRNA precursor, generating 3' termini of tRNAs. A 3'-hydroxy group is left at the tRNA terminus and a 5'-phosphoryl group is left at the trailer molecule.. Its function is as follows. Zinc phosphodiesterase, which displays some tRNA 3'-processing endonuclease activity. Probably involved in tRNA maturation, by removing a 3'-trailer from precursor tRNA. In Saccharolobus islandicus (strain M.16.27) (Sulfolobus islandicus), this protein is Ribonuclease Z.